A 456-amino-acid chain; its full sequence is MAHGNAPRDSYHLVGISFFILGLGTLLPWNFFITAIPYFQGRLAGTNSSAETPSTNHTSPTDTFNFNNWVTLLSQLPLLLFTLLNSFLYQCIPESVRILGSLLAILLLFALTAALVKVDLSPGLFFSITMASVWFINSFCAVLQGSLFGQLGTMPSTYSTLFLSGQGLAGIFAALAMLTSLASGVDPQTSALGYFITPCVGILLSIICYLSLPHLKFARYYLTKKPQAPVQELETKAELLGADEKNGIPVSPQQAGPTLDLDPEKELELGLEEPQKPGKPSVFVVFRKIWLTALCLVLVFTVTLSVFPAITAMVTTSSNSPGKWSQFFNPICCFLLFNVMDWLGRSLTSYFLWPDEDSQLLPLLVCLRFLFVPLFMLCHVPQRARLPIIFWQDAYFITFMLLFAISNGYFVSLTMCLAPRQVLPHEREVAGALMTFFLALGLSCGASLSFLFKALL.

Residues 1-12 (MAHGNAPRDSYH) are Cytoplasmic-facing. A helical membrane pass occupies residues 13-29 (LVGISFFILGLGTLLPW). Residues 30-68 (NFFITAIPYFQGRLAGTNSSAETPSTNHTSPTDTFNFNN) are Extracellular-facing. N-linked (GlcNAc...) asparagine glycans are attached at residues Asn-47 and Asn-56. Residues 69–93 (WVTLLSQLPLLLFTLLNSFLYQCIP) form a helical membrane-spanning segment. At 94 to 97 (ESVR) the chain is on the cytoplasmic side. A helical transmembrane segment spans residues 98–116 (ILGSLLAILLLFALTAALV). At 117–124 (KVDLSPGL) the chain is on the extracellular side. Residues 125-143 (FFSITMASVWFINSFCAVL) traverse the membrane as a helical segment. Over 144 to 160 (QGSLFGQLGTMPSTYST) the chain is Cytoplasmic. Residues 161–185 (LFLSGQGLAGIFAALAMLTSLASGV) form a helical membrane-spanning segment. The Extracellular segment spans residues 186–192 (DPQTSAL). A helical transmembrane segment spans residues 193–213 (GYFITPCVGILLSIICYLSLP). Residues 214-291 (HLKFARYYLT…VFVVFRKIWL (78 aa)) are Cytoplasmic-facing. Ser-251 carries the phosphoserine modification. The helical transmembrane segment at 292-311 (TALCLVLVFTVTLSVFPAIT) threads the bilayer. Residues 312-323 (AMVTTSSNSPGK) lie on the Extracellular side of the membrane. Residues 324 to 342 (WSQFFNPICCFLLFNVMDW) traverse the membrane as a helical segment. The Cytoplasmic portion of the chain corresponds to 343–359 (LGRSLTSYFLWPDEDSQ). The chain crosses the membrane as a helical span at residues 360–378 (LLPLLVCLRFLFVPLFMLC). Residues 379-393 (HVPQRARLPIIFWQD) lie on the Extracellular side of the membrane. A helical transmembrane segment spans residues 394 to 413 (AYFITFMLLFAISNGYFVSL). The Cytoplasmic portion of the chain corresponds to 414–431 (TMCLAPRQVLPHEREVAG). Residues 432–452 (ALMTFFLALGLSCGASLSFLF) form a helical membrane-spanning segment. At 453–456 (KALL) the chain is on the extracellular side.

It belongs to the SLC29A/ENT transporter (TC 2.A.57) family. Expressed in squeletal muscles. Expressed in testis at the blood-brain-barrier.

It localises to the apical cell membrane. Its subcellular location is the basolateral cell membrane. It carries out the reaction uridine(out) = uridine(in). It catalyses the reaction inosine(in) = inosine(out). The catalysed reaction is adenosine(in) = adenosine(out). The enzyme catalyses thymidine(in) = thymidine(out). It carries out the reaction hypoxanthine(out) = hypoxanthine(in). It catalyses the reaction adenine(out) = adenine(in). The catalysed reaction is cytidine(in) = cytidine(out). The enzyme catalyses thymine(out) = thymine(in). It carries out the reaction uracil(in) = uracil(out). It catalyses the reaction guanine(out) = guanine(in). The catalysed reaction is guanosine(in) = guanosine(out). Functionally, bidirectional uniporter involved in the facilitative transport of nucleosides and nucleobases, and contributes to maintaining their cellular homeostasis. Functions as a Na(+)-independent, passive transporter. Involved in the transport of nucleosides such as inosine, adenosine, uridine, thymidine, cytidine and guanosine. Also able to transport purine nucleobases (hypoxanthine, adenine, guanine) and pyrimidine nucleobases (thymine, uracil). Involved in nucleoside transport at basolateral membrane of kidney cells, allowing liver absorption of nucleoside metabolites. Mediates apical nucleoside uptake into Sertoli cells, thereby regulating the transport of nucleosides in testis across the blood-testis-barrier. Mediates both the influx and efflux of hypoxanthine in skeletal muscle microvascular endothelial cells to control the amount of intracellular hypoxanthine available for xanthine oxidase-mediated ROS production. This Rattus norvegicus (Rat) protein is Equilibrative nucleoside transporter 2.